The chain runs to 185 residues: Elongation factor P (185 aa).

The protein belongs to the elongation factor P family.

The protein resides in the cytoplasm. It participates in protein biosynthesis; polypeptide chain elongation. In terms of biological role, involved in peptide bond synthesis. Stimulates efficient translation and peptide-bond synthesis on native or reconstituted 70S ribosomes in vitro. Probably functions indirectly by altering the affinity of the ribosome for aminoacyl-tRNA, thus increasing their reactivity as acceptors for peptidyl transferase. The sequence is that of Elongation factor P from Bacillus velezensis (strain DSM 23117 / BGSC 10A6 / LMG 26770 / FZB42) (Bacillus amyloliquefaciens subsp. plantarum).